A 318-amino-acid polypeptide reads, in one-letter code: tRNA(Ile)-lysidine synthase (318 aa).

26-31 (SGGADS) is a binding site for ATP.

It belongs to the tRNA(Ile)-lysidine synthase family.

The protein resides in the cytoplasm. The enzyme catalyses cytidine(34) in tRNA(Ile2) + L-lysine + ATP = lysidine(34) in tRNA(Ile2) + AMP + diphosphate + H(+). Ligates lysine onto the cytidine present at position 34 of the AUA codon-specific tRNA(Ile) that contains the anticodon CAU, in an ATP-dependent manner. Cytidine is converted to lysidine, thus changing the amino acid specificity of the tRNA from methionine to isoleucine. This is tRNA(Ile)-lysidine synthase from Nocardia farcinica (strain IFM 10152).